We begin with the raw amino-acid sequence, 329 residues long: MNELLHQHKAIPEDERNFALRPSLIEEFVGQSEIIENLKVFIKSAYERRATLDHVLLYGPPGLGKTTLAHIIAKELKVSLRSTSGPLLSKAGDLAAILTNLQPMDVLFIDEIHRLHRNIEEILYSAMEDCCLDIVVGEGCGARTLRIDLPAFTLVGATTRFGLISNPLRDRFGIPLHLEFYSVEELMLVIKRAAHVICTDIDDSGAYEIASRSRGTPRIALRLFRRVRDFMVVERQSIIDNHFADSALFNLGVDKSGLDKMDIKYLSFIYEAKNAVGIETIAAALSEDVGNIEETIEPYLLKIGFIQRTPRGRILTTKAIEHLMNYKYI.

Positions 1–181 (MNELLHQHKA…FGIPLHLEFY (181 aa)) are large ATPase domain (RuvB-L). ATP is bound by residues leucine 20, arginine 21, glycine 62, lysine 65, threonine 66, threonine 67, arginine 171, tyrosine 181, and arginine 218. Mg(2+) is bound at residue threonine 66. The segment at 182–252 (SVEELMLVIK…FADSALFNLG (71 aa)) is small ATPAse domain (RuvB-S). Positions 255–329 (KSGLDKMDIK…IEHLMNYKYI (75 aa)) are head domain (RuvB-H). DNA contacts are provided by arginine 308 and arginine 313.

This sequence belongs to the RuvB family. Homohexamer. Forms an RuvA(8)-RuvB(12)-Holliday junction (HJ) complex. HJ DNA is sandwiched between 2 RuvA tetramers; dsDNA enters through RuvA and exits via RuvB. An RuvB hexamer assembles on each DNA strand where it exits the tetramer. Each RuvB hexamer is contacted by two RuvA subunits (via domain III) on 2 adjacent RuvB subunits; this complex drives branch migration. In the full resolvosome a probable DNA-RuvA(4)-RuvB(12)-RuvC(2) complex forms which resolves the HJ.

It localises to the cytoplasm. It carries out the reaction ATP + H2O = ADP + phosphate + H(+). The RuvA-RuvB-RuvC complex processes Holliday junction (HJ) DNA during genetic recombination and DNA repair, while the RuvA-RuvB complex plays an important role in the rescue of blocked DNA replication forks via replication fork reversal (RFR). RuvA specifically binds to HJ cruciform DNA, conferring on it an open structure. The RuvB hexamer acts as an ATP-dependent pump, pulling dsDNA into and through the RuvAB complex. RuvB forms 2 homohexamers on either side of HJ DNA bound by 1 or 2 RuvA tetramers; 4 subunits per hexamer contact DNA at a time. Coordinated motions by a converter formed by DNA-disengaged RuvB subunits stimulates ATP hydrolysis and nucleotide exchange. Immobilization of the converter enables RuvB to convert the ATP-contained energy into a lever motion, pulling 2 nucleotides of DNA out of the RuvA tetramer per ATP hydrolyzed, thus driving DNA branch migration. The RuvB motors rotate together with the DNA substrate, which together with the progressing nucleotide cycle form the mechanistic basis for DNA recombination by continuous HJ branch migration. Branch migration allows RuvC to scan DNA until it finds its consensus sequence, where it cleaves and resolves cruciform DNA. In Anaplasma phagocytophilum (strain HZ), this protein is Holliday junction branch migration complex subunit RuvB.